The primary structure comprises 222 residues: MSHLVKMENGQSQTIQEMLGCIERYNPDHLKILESYVQDQAKNNTYDLEANLAVLKLYQFNPHMLNFEITYTILLKCLTNLPHTDFVMAKCLLLPQQMKDENVQTIIDLADILERADFTLFWQRAEVNRTMFRHITGFHDSIRKFVSHVVGTTFQTIKKDLLKELLGGIEDPTLESWIKRNSWKHQGQDLVVVATQDDKIKTKNITEKIEFDNVGALMAQCL.

The PCI domain occupies 46–208 (YDLEANLAVL…KIKTKNITEK (163 aa)).

Belongs to the eIF-3 subunit K family. As to quaternary structure, component of the eukaryotic translation initiation factor 3 (eIF-3) complex. The eIF-3 complex interacts with pix.

The protein localises to the cytoplasm. In terms of biological role, component of the eukaryotic translation initiation factor 3 (eIF-3) complex, which is involved in protein synthesis of a specialized repertoire of mRNAs and, together with other initiation factors, stimulates binding of mRNA and methionyl-tRNAi to the 40S ribosome. The eIF-3 complex specifically targets and initiates translation of a subset of mRNAs involved in cell proliferation. The polypeptide is Eukaryotic translation initiation factor 3 subunit K (Drosophila willistoni (Fruit fly)).